Consider the following 204-residue polypeptide: Protein GrpE (204 aa).

Residues 1–42 form a disordered region; that stretch reads MTDETAKNGPDAAADAQIEPQVQEETNSTAEDAGQDNNPTAA. Positions 23–41 are enriched in polar residues; that stretch reads QEETNSTAEDAGQDNNPTA.

This sequence belongs to the GrpE family. As to quaternary structure, homodimer.

The protein localises to the cytoplasm. In terms of biological role, participates actively in the response to hyperosmotic and heat shock by preventing the aggregation of stress-denatured proteins, in association with DnaK and GrpE. It is the nucleotide exchange factor for DnaK and may function as a thermosensor. Unfolded proteins bind initially to DnaJ; upon interaction with the DnaJ-bound protein, DnaK hydrolyzes its bound ATP, resulting in the formation of a stable complex. GrpE releases ADP from DnaK; ATP binding to DnaK triggers the release of the substrate protein, thus completing the reaction cycle. Several rounds of ATP-dependent interactions between DnaJ, DnaK and GrpE are required for fully efficient folding. This chain is Protein GrpE, found in Allorhizobium ampelinum (strain ATCC BAA-846 / DSM 112012 / S4) (Agrobacterium vitis (strain S4)).